The primary structure comprises 208 residues: Uracil phosphoribosyltransferase (208 aa).

Residues R78, R103, and 130-138 (DPMLATGGS) each bind 5-phospho-alpha-D-ribose 1-diphosphate. Uracil-binding positions include I193 and 198–200 (GDA). D199 lines the 5-phospho-alpha-D-ribose 1-diphosphate pocket.

It belongs to the UPRTase family. Requires Mg(2+) as cofactor.

The catalysed reaction is UMP + diphosphate = 5-phospho-alpha-D-ribose 1-diphosphate + uracil. Its pathway is pyrimidine metabolism; UMP biosynthesis via salvage pathway; UMP from uracil: step 1/1. Its activity is regulated as follows. Allosterically activated by GTP. Functionally, catalyzes the conversion of uracil and 5-phospho-alpha-D-ribose 1-diphosphate (PRPP) to UMP and diphosphate. In Pelobacter propionicus (strain DSM 2379 / NBRC 103807 / OttBd1), this protein is Uracil phosphoribosyltransferase.